Here is a 587-residue protein sequence, read N- to C-terminus: MATCWPALWAYRFYLIVLCLPIFLLPLPLIVQTKEAYCAYSIILMALLWCTEALPLAVTALFPIVLFPLMGIMDASEVCIEYFKDTNILFVGGLMVAIAVEHWNLHKRIALQVLLIIGVRPALLLLGFMLVTAFLSMWISNTATTAMMVPIGHAVLEQLQGSKKDVEGGNNNPTFELQEECPQKEVTKLDNGQPVSAPSEPRTQKTQEHHRFSQGLSLCICYSASIGGIATLTGTTPNLVLQGQVNSLFPQNGNVVNFASWFGFAFPTMIILLLLAWLWLQVLFLGVNFRKNFGFGEGEEERKQAAFQVIKTQYRLLGPMSFAEKTVTVLFVLLVVLWFTREPGFFPGWGDTVFANEKGQSMASDGTVAIFISLVMFIIPSKIPGLMQDPKKPGKLKAPPAILTWKTVNDKMPWNIVILLGGGFALAKGSEQSGLSEWLGDKLTPLQHIPPSATAVILCLLIAIFTECTSNVATTTLFLPILASMAQAICLHPLYVMLPCTLAASLAFMLPVATPPNAIVFSFGGLKVSDMARAGFLLNIIGVLAITLSINSWSIPIFKLDTFPSWAHSNTSQCLLNPSNSTVPGGL.

The next 4 membrane-spanning stretches (helical) occupy residues 13-33 (FYLIVLCLPIFLLPLPLIVQT), 53-73 (ALPLAVTALFPIVLFPLMGIM), 86-106 (TNILFVGGLMVAIAVEHWNLH), and 136-156 (SMWISNTATTAMMVPIGHAVL). The interval 188 to 208 (KLDNGQPVSAPSEPRTQKTQE) is disordered. A run of 8 helical transmembrane segments spans residues 264-284 (FAFPTMIILLLLAWLWLQVLF), 329-349 (VLFVLLVVLWFTREPGFFPGW), 367-387 (TVAIFISLVMFIIPSKIPGLM), 407-427 (TVNDKMPWNIVILLGGGFALA), 445-465 (PLQHIPPSATAVILCLLIAIF), 477-497 (LFLPILASMAQAICLHPLYVM), 506-526 (LAFMLPVATPPNAIVFSFGGL), and 535-555 (GFLLNIIGVLAITLSINSWSI).

This sequence belongs to the SLC13A/DASS transporter (TC 2.A.47) family. NADC subfamily. Expressed in large and small intestine and in the kidney proximal tubules.

The protein resides in the apical cell membrane. It catalyses the reaction succinate(out) + 3 Na(+)(out) = succinate(in) + 3 Na(+)(in). The catalysed reaction is fumarate(out) + 3 Na(+)(out) = fumarate(in) + 3 Na(+)(in). The enzyme catalyses 2-oxoglutarate(out) + 3 Na(+)(out) = 2-oxoglutarate(in) + 3 Na(+)(in). With respect to regulation, li(+) decreases succinate transport in the presence of Na(+), by competing at one of the three cation binding sites. Functionally, low-affinity sodium-dicarboxylate cotransporter, that mediates the entry of citric acid cycle intermediates, such as succinate, citrate, fumarate and alpha-ketoglutarate (2-oxoglutarate) into the small intestine and renal proximal tubule. Transports the dicarboxylate into the cell with a probable stoichiometry of 3 Na(+) for 1 divalent dicarboxylate, rendering the process electrogenic. Citrate is transported in protonated form as a divalent anion, rather than the trivalent form which is normally found in blood. Has a critical role in renal dicarboxylate transport. This is Solute carrier family 13 member 2 (Slc13a2) from Rattus norvegicus (Rat).